The sequence spans 811 residues: Lysine-specific histone demethylase 1 homolog 3 (811 aa).

Residues 1 to 10 (MSDQPPPYTP) are compositionally biased toward pro residues. Residues 1 to 79 (MSDQPPPYTP…PSAQPPPRAS (79 aa)) are disordered. The span at 44-55 (NKRKRTGFRRKL) shows a compositional bias: basic residues. The span at 56-71 (PSGSPAAPVAVAASPS) shows a compositional bias: low complexity. The SWIRM domain occupies 88 to 189 (NREPTAEAVT…FGVAPAIKER (102 aa)). FAD is bound by residues E227, R229, R235, and E609. The segment at 790–811 (RNSSRTKTRPSKLKIGIPKSKS) is disordered.

The protein belongs to the flavin monoamine oxidase family. The cofactor is FAD.

Probable histone demethylase. In Oryza sativa subsp. japonica (Rice), this protein is Lysine-specific histone demethylase 1 homolog 3.